Here is a 1058-residue protein sequence, read N- to C-terminus: Carbamoyl phosphate synthase large chain (1058 aa).

The interval 1 to 401 (MSKRKDIQKI…SLLKACRSLE (401 aa)) is carboxyphosphate synthetic domain. 12 residues coordinate ATP: R129, R169, G175, G176, R208, I210, E215, G241, I242, H243, Q284, and E298. The region spanning 133–327 (KQLMQELDQP…IAKLAAKIAV (195 aa)) is the ATP-grasp 1 domain. Residues Q284, E298, and N300 each coordinate Mg(2+). Residues Q284, E298, and N300 each coordinate Mn(2+). Positions 402 to 546 (IGVCHNEMTS…YSTYELENES (145 aa)) are oligomerization domain. The segment at 547 to 929 (VQSNKESILV…ALYKAFEANN (383 aa)) is carbamoyl phosphate synthetic domain. Positions 671-861 (EKALKELGIP…MAQIATKLIL (191 aa)) constitute an ATP-grasp 2 domain. Residues R707, S746, I748, E752, G777, V778, H779, S780, Q820, and E832 each coordinate ATP. Mg(2+)-binding residues include Q820, E832, and N834. Residues Q820, E832, and N834 each contribute to the Mn(2+) site. Residues 930 to 1058 (SHLSEFGQIV…ESRCFNIEAI (129 aa)) enclose the MGS-like domain. The interval 930 to 1058 (SHLSEFGQIV…ESRCFNIEAI (129 aa)) is allosteric domain.

It belongs to the CarB family. As to quaternary structure, composed of two chains; the small (or glutamine) chain promotes the hydrolysis of glutamine to ammonia, which is used by the large (or ammonia) chain to synthesize carbamoyl phosphate. Tetramer of heterodimers (alpha,beta)4. Mg(2+) is required as a cofactor. Mn(2+) serves as cofactor.

The catalysed reaction is hydrogencarbonate + L-glutamine + 2 ATP + H2O = carbamoyl phosphate + L-glutamate + 2 ADP + phosphate + 2 H(+). It catalyses the reaction hydrogencarbonate + NH4(+) + 2 ATP = carbamoyl phosphate + 2 ADP + phosphate + 2 H(+). It participates in amino-acid biosynthesis; L-arginine biosynthesis; carbamoyl phosphate from bicarbonate: step 1/1. Its pathway is pyrimidine metabolism; UMP biosynthesis via de novo pathway; (S)-dihydroorotate from bicarbonate: step 1/3. Large subunit of the glutamine-dependent carbamoyl phosphate synthetase (CPSase). CPSase catalyzes the formation of carbamoyl phosphate from the ammonia moiety of glutamine, carbonate, and phosphate donated by ATP, constituting the first step of 2 biosynthetic pathways, one leading to arginine and/or urea and the other to pyrimidine nucleotides. The large subunit (synthetase) binds the substrates ammonia (free or transferred from glutamine from the small subunit), hydrogencarbonate and ATP and carries out an ATP-coupled ligase reaction, activating hydrogencarbonate by forming carboxy phosphate which reacts with ammonia to form carbamoyl phosphate. This Streptococcus pyogenes serotype M5 (strain Manfredo) protein is Carbamoyl phosphate synthase large chain.